Reading from the N-terminus, the 1157-residue chain is Nitric oxide synthase, inducible (1157 aa).

The DINNN-motif; mediates interaction with SPSB1, SPSB2 and SPSB4 motif lies at 23 to 27 (DINNN). Residues 29–64 (EKLRQASSSPVTQDDPKCPSRSRHRNECSQPLAETA) form a disordered region. Residues cysteine 110 and cysteine 115 each coordinate Zn(2+). Cysteine 200 lines the heme b pocket. Residues glutamine 263, tryptophan 372, tyrosine 373, and glutamate 377 each contribute to the L-arginine site. Residues arginine 381, isoleucine 462, tryptophan 463, and phenylalanine 476 each contribute to the (6R)-L-erythro-5,6,7,8-tetrahydrobiopterin site. Position 491 (tyrosine 491) interacts with heme b. Residues 515-535 (FKVLVKAVLFAAVLMHKTMAA) are calmodulin-binding. A Flavodoxin-like domain is found at 539–677 (ATILFATETG…AFRGWAVQTF (139 aa)). Residues threonine 545, glutamate 546, threonine 547, arginine 549, serine 550, serine 591, threonine 592, serine 628, cysteine 635, glutamate 661, and glutamine 665 each coordinate FMN. One can recognise an FAD-binding FR-type domain in the interval 730-970 (KYVFSMRLKS…VRSASGFQLP (241 aa)). Arginine 750 provides a ligand contact to NADP(+). Histidine 772, arginine 906, tyrosine 908, serine 909, threonine 924, and alanine 926 together coordinate FAD. Threonine 929 provides a ligand contact to NADP(+). FAD is bound by residues tyrosine 930, valine 943, cysteine 944, and serine 945. Residues threonine 984, arginine 1017, serine 1046, arginine 1047, lysine 1053, tyrosine 1055, glutamine 1057, and aspartate 1090 each contribute to the NADP(+) site. The disordered stretch occupies residues 1138–1157 (KEGAVGPPSDPRAPGAHGKS).

The protein belongs to the NOS family. As to quaternary structure, homodimer. Interacts with NHERF1. Interacts with GAPDH; induced by oxidatively-modified low-densitity lipoprotein (LDL(ox)). Interacts with S100A8 and S100A9 to form the iNOS-S100A8/9 transnitrosylase complex. Interacts with SPSB1, SPSB2 and SPSB4. Interacts with ELOC and CUL5 in the presence of SPSB1 or SPSB2 or SPSB4. Forms a complex with ASL, ASS1 and HSP90AA1; the complex regulates cell-autonomous L-arginine synthesis and citrulline recycling while channeling extracellular L-arginine to nitric oxide synthesis pathway. Heme b is required as a cofactor. The cofactor is FAD. FMN serves as cofactor. Requires (6R)-L-erythro-5,6,7,8-tetrahydrobiopterin as cofactor. In terms of processing, polyubiquitinated; mediated by SPSB1, SPSB2 and SPSB4, leading to proteasomal degradation. As to expression, detected in both stimulated and unstimulated immune cells and macrophages with little or no up-regulation following cellular stimulation with lipopolysaccharides (LPS) or concanavalin A (ConA).

It is found in the cytoplasm. The protein localises to the cytosol. The catalysed reaction is 2 L-arginine + 3 NADPH + 4 O2 + H(+) = 2 L-citrulline + 2 nitric oxide + 3 NADP(+) + 4 H2O. Not stimulated by calcium/calmodulin. Functionally, produces nitric oxide (NO) which is a messenger molecule with diverse functions throughout the body. In macrophages, NO mediates tumoricidal and bactericidal actions. Also has nitrosylase activity and mediates cysteine S-nitrosylation of cytoplasmic target proteins such PTGS2/COX2. As component of the iNOS-S100A8/9 transnitrosylase complex involved in the selective inflammatory stimulus-dependent S-nitrosylation of GAPDH implicated in regulation of the GAIT complex activity and probably multiple targets including ANXA5, EZR, MSN and VIM. Involved in inflammation, enhances the synthesis of pro-inflammatory mediators such as IL6 and IL8. This is Nitric oxide synthase, inducible (NOS2) from Sus scrofa (Pig).